We begin with the raw amino-acid sequence, 126 residues long: MLLSRAISVLALLACIRCGVHAQNTEQNLKTQLTTDSAMITSQRLLRTSVDFKDSEERWPTESSRIRSAIKDYFREFPEKVSIAMAIRQIDAHGVRHVEKVLSQYKFPAADQGNIRLAIIHHKAPK.

The first 22 residues, 1 to 22, serve as a signal peptide directing secretion; sequence MLLSRAISVLALLACIRCGVHA. The RxLR-dEER signature appears at 44–58; it reads RLLRTSVDFKDSEER.

This sequence belongs to the RxLR effector family.

It is found in the secreted. Its subcellular location is the host cell. Functionally, secreted effector that triggers a hypersensitive response (HR) in 3 Lactuca saligna accessions (CGN05947, CGN05310, CGN05304). The polypeptide is RxLR effector protein BLR31 (Bremia lactucae (Lettuce downy mildew)).